The chain runs to 1116 residues: MAP kinase kinase kinase mkh1 (1116 aa).

2 disordered regions span residues 510–601 (LKMP…SNSL) and 618–647 (ALDESDLSGDPFWAIQPKQSSSQVPKENHH). A compositionally biased stretch (low complexity) spans 515-531 (NSGSSAPQSPSSNTSAS). Residues 553 to 569 (LRRKNTLTRRPSIRHAR) are compositionally biased toward basic residues. Positions 588 to 601 (SFDPKASSKSSNSL) are enriched in low complexity. A compositionally biased stretch (polar residues) spans 634-647 (PKQSSSQVPKENHH). The 270-residue stretch at 825-1094 (WMKGELIGNG…AEELLNHPFM (270 aa)) folds into the Protein kinase domain. ATP is bound by residues 831-839 (IGNGTYGKV) and lysine 854. Aspartate 955 functions as the Proton acceptor in the catalytic mechanism.

Belongs to the protein kinase superfamily. STE Ser/Thr protein kinase family. MAP kinase kinase kinase subfamily.

It carries out the reaction L-seryl-[protein] + ATP = O-phospho-L-seryl-[protein] + ADP + H(+). The enzyme catalyses L-threonyl-[protein] + ATP = O-phospho-L-threonyl-[protein] + ADP + H(+). Functionally, may regulate cell morphology, cell wall integrity, salt resistance, cell cycle reentry from stationary-phase arrest, and filamentous growth in response to stress. Activates the MAP kinase kinase skh1/pek1 by phosphorylation. The protein is MAP kinase kinase kinase mkh1 (mkh1) of Schizosaccharomyces pombe (strain 972 / ATCC 24843) (Fission yeast).